We begin with the raw amino-acid sequence, 181 residues long: Adenine phosphoribosyltransferase (181 aa).

This sequence belongs to the purine/pyrimidine phosphoribosyltransferase family. In terms of assembly, homodimer.

The protein resides in the cytoplasm. It catalyses the reaction AMP + diphosphate = 5-phospho-alpha-D-ribose 1-diphosphate + adenine. It functions in the pathway purine metabolism; AMP biosynthesis via salvage pathway; AMP from adenine: step 1/1. Catalyzes a salvage reaction resulting in the formation of AMP, that is energically less costly than de novo synthesis. The polypeptide is Adenine phosphoribosyltransferase (Vibrio cholerae serotype O1 (strain ATCC 39541 / Classical Ogawa 395 / O395)).